A 363-amino-acid chain; its full sequence is NAD(P)H-quinone oxidoreductase subunit 1, chloroplastic (363 aa).

The next 6 membrane-spanning stretches (helical) occupy residues 30-50 (LVPIFTPVLGITIGVLAIVWL), 98-118 (FSIGPSIAVISILLSYLIIPF), 129-149 (IGVFLWIAISSIAPIGLLMSG), 248-268 (YSGIKFGLFYVASYLNLLVSS), 300-320 (VFGTTIGIFITLAKTYLFLFI), and 336-356 (LLNLGWKFLLPISLGNLLLTT).

Belongs to the complex I subunit 1 family. As to quaternary structure, NDH is composed of at least 16 different subunits, 5 of which are encoded in the nucleus.

It localises to the plastid. The protein resides in the chloroplast thylakoid membrane. It catalyses the reaction a plastoquinone + NADH + (n+1) H(+)(in) = a plastoquinol + NAD(+) + n H(+)(out). It carries out the reaction a plastoquinone + NADPH + (n+1) H(+)(in) = a plastoquinol + NADP(+) + n H(+)(out). NDH shuttles electrons from NAD(P)H:plastoquinone, via FMN and iron-sulfur (Fe-S) centers, to quinones in the photosynthetic chain and possibly in a chloroplast respiratory chain. The immediate electron acceptor for the enzyme in this species is believed to be plastoquinone. Couples the redox reaction to proton translocation, and thus conserves the redox energy in a proton gradient. This Vitis vinifera (Grape) protein is NAD(P)H-quinone oxidoreductase subunit 1, chloroplastic.